A 348-amino-acid chain; its full sequence is MDLFPLARPLMSLMDPETAHGLTLRALRLGLGPTRRAPDPVSLAIDLFGLHFENPLGIAAGFDKNGEVPDAMLAMGMGFAEVGTVTPLPQPGNPRPRVFRLPVHRAVINRLGFNNQGHAALKKRLLARRKRPGILGVNIGANKDAADRIADYEAGIRAFEGLASYFTVNISSPNTPGLRALQNKAELQNLVARVLAARKGKTPVLLKIAPDLNAEELGDIAEVALEQGLDGLIVSNTTIAREGLVSGVNANETGGLSGAPLFPMSTAVLRDMYRLTGGRLPLVGVGGISSADDAYAKIRAGASLVQLYSALTYDGPPLVARIKQGLAARLAADGFAHLKDAVGADVNL.

FMN is bound by residues 60 to 64 (AGFDK) and Thr-84. Lys-64 is a substrate binding site. 109 to 113 (NRLGF) lines the substrate pocket. The FMN site is built by Asn-138 and Asn-169. Asn-169 lines the substrate pocket. Ser-172 acts as the Nucleophile in catalysis. Asn-174 is a binding site for substrate. Residues Lys-207 and Ser-235 each coordinate FMN. 236 to 237 (NT) is a substrate binding site. FMN-binding positions include Gly-258, Gly-287, and 308–309 (YS).

The protein belongs to the dihydroorotate dehydrogenase family. Type 2 subfamily. Monomer. The cofactor is FMN.

Its subcellular location is the cell membrane. It carries out the reaction (S)-dihydroorotate + a quinone = orotate + a quinol. The protein operates within pyrimidine metabolism; UMP biosynthesis via de novo pathway; orotate from (S)-dihydroorotate (quinone route): step 1/1. Its function is as follows. Catalyzes the conversion of dihydroorotate to orotate with quinone as electron acceptor. In Parvibaculum lavamentivorans (strain DS-1 / DSM 13023 / NCIMB 13966), this protein is Dihydroorotate dehydrogenase (quinone).